Reading from the N-terminus, the 85-residue chain is Large ribosomal subunit protein bL27 (85 aa).

The interval 1 to 21 (MAHKKGVGSSRNGRDSDGQRL) is disordered.

This sequence belongs to the bacterial ribosomal protein bL27 family.

The chain is Large ribosomal subunit protein bL27 from Citrifermentans bemidjiense (strain ATCC BAA-1014 / DSM 16622 / JCM 12645 / Bem) (Geobacter bemidjiensis).